A 359-amino-acid chain; its full sequence is Phospho-N-acetylmuramoyl-pentapeptide-transferase (359 aa).

Helical transmembrane passes span 3–23 (QILF…PVLI), 53–73 (GGVA…LIGI), 84–104 (GLLV…DDFI), 117–137 (TAKL…ALQF), 156–176 (IATV…LVSA), 187–207 (LDGL…IITF), 231–251 (LALI…WNAA), 255–275 (IFMG…LSIT), 283–303 (VVIG…VAVF), and 330–350 (VIIR…ALFY).

Belongs to the glycosyltransferase 4 family. MraY subfamily. It depends on Mg(2+) as a cofactor.

The protein resides in the cell membrane. It catalyses the reaction UDP-N-acetyl-alpha-D-muramoyl-L-alanyl-gamma-D-glutamyl-meso-2,6-diaminopimeloyl-D-alanyl-D-alanine + di-trans,octa-cis-undecaprenyl phosphate = di-trans,octa-cis-undecaprenyl diphospho-N-acetyl-alpha-D-muramoyl-L-alanyl-D-glutamyl-meso-2,6-diaminopimeloyl-D-alanyl-D-alanine + UMP. It functions in the pathway cell wall biogenesis; peptidoglycan biosynthesis. Functionally, catalyzes the initial step of the lipid cycle reactions in the biosynthesis of the cell wall peptidoglycan: transfers peptidoglycan precursor phospho-MurNAc-pentapeptide from UDP-MurNAc-pentapeptide onto the lipid carrier undecaprenyl phosphate, yielding undecaprenyl-pyrophosphoryl-MurNAc-pentapeptide, known as lipid I. The protein is Phospho-N-acetylmuramoyl-pentapeptide-transferase of Rhodococcus jostii (strain RHA1).